An 85-amino-acid chain; its full sequence is Sec-independent protein translocase protein TatA (85 aa).

Residues 1 to 21 form a helical membrane-spanning segment; sequence MGGISIWQLLIIALIVVLLFG. The tract at residues 43–85 is disordered; the sequence is MSSEEDKKALEDAEAAKPVQTAQTAQPTQQATEKKPESNKEQA. A compositionally biased stretch (basic and acidic residues) spans 46 to 57; that stretch reads EEDKKALEDAEA. Positions 58-73 are enriched in low complexity; the sequence is AKPVQTAQTAQPTQQA. Residues 74-85 show a composition bias toward basic and acidic residues; the sequence is TEKKPESNKEQA.

It belongs to the TatA/E family. In terms of assembly, the Tat system comprises two distinct complexes: a TatABC complex, containing multiple copies of TatA, TatB and TatC subunits, and a separate TatA complex, containing only TatA subunits. Substrates initially bind to the TatABC complex, which probably triggers association of the separate TatA complex to form the active translocon.

Its subcellular location is the cell inner membrane. Its function is as follows. Part of the twin-arginine translocation (Tat) system that transports large folded proteins containing a characteristic twin-arginine motif in their signal peptide across membranes. TatA could form the protein-conducting channel of the Tat system. In Shewanella sp. (strain MR-4), this protein is Sec-independent protein translocase protein TatA.